Here is a 282-residue protein sequence, read N- to C-terminus: Putative phosphatase in upp 3'region (282 aa).

Catalysis depends on Asp17, which acts as the Nucleophile. Asp17 contacts Mg(2+). Residue Leu18 coordinates phosphate. Mg(2+) is bound at residue Asp19. Residues 53-54 (TG) and Lys211 contribute to the phosphate site. The Mg(2+) site is built by Asp234 and Ser235. Asn237 lines the phosphate pocket.

It belongs to the HAD-like hydrolase superfamily. Cof family. Mg(2+) serves as cofactor.

The chain is Putative phosphatase in upp 3'region from Metamycoplasma hominis (Mycoplasma hominis).